Reading from the N-terminus, the 233-residue chain is Small ribosomal subunit protein uS3 (233 aa).

The region spanning 39–107 (VRQYLTKELA…PAQINIAEVR (69 aa)) is the KH type-2 domain.

This sequence belongs to the universal ribosomal protein uS3 family. Part of the 30S ribosomal subunit. Forms a tight complex with proteins S10 and S14.

In terms of biological role, binds the lower part of the 30S subunit head. Binds mRNA in the 70S ribosome, positioning it for translation. The sequence is that of Small ribosomal subunit protein uS3 from Citrobacter koseri (strain ATCC BAA-895 / CDC 4225-83 / SGSC4696).